The following is a 347-amino-acid chain: NHL repeat-containing protein 3 (347 aa).

Positions 1 to 22 (MARAWVCLAGAAFFLSCLVLHS) are cleaved as a signal peptide. One copy of the NHL 1 repeat lies at 47–93 (RLDLGWPKNSEYFTGATFCVAVDSLNGLVYVAQRGDNIPKVLVFSED). N-linked (GlcNAc...) asparagine glycosylation occurs at Asn-101. NHL repeat units lie at residues 150–196 (TPGK…LSQD) and 200–243 (LWLR…FDKD). Asn-206 and Asn-278 each carry an N-linked (GlcNAc...) asparagine glycan. The stretch at 294–338 (GDCSVVSTIQLADQVLPHLLEVDRKTGAVYVAEIGAKQIQKYIPW) is one NHL 4 repeat.

The protein is NHL repeat-containing protein 3 (Nhlrc3) of Mus musculus (Mouse).